A 377-amino-acid polypeptide reads, in one-letter code: Homoserine O-acetyltransferase (377 aa).

Residues 48 to 347 form the AB hydrolase-1 domain; sequence NVVLIEHALT…PVGHDAFLTE (300 aa). Catalysis depends on serine 143, which acts as the Nucleophile. Residue arginine 213 coordinates substrate. Active-site residues include aspartate 311 and histidine 341. Substrate is bound at residue aspartate 342.

It belongs to the AB hydrolase superfamily. MetX family. Homodimer.

It localises to the cytoplasm. It catalyses the reaction L-homoserine + acetyl-CoA = O-acetyl-L-homoserine + CoA. It participates in amino-acid biosynthesis; L-methionine biosynthesis via de novo pathway; O-acetyl-L-homoserine from L-homoserine: step 1/1. In terms of biological role, transfers an acetyl group from acetyl-CoA to L-homoserine, forming acetyl-L-homoserine. The polypeptide is Homoserine O-acetyltransferase (Corynebacterium glutamicum (strain ATCC 13032 / DSM 20300 / JCM 1318 / BCRC 11384 / CCUG 27702 / LMG 3730 / NBRC 12168 / NCIMB 10025 / NRRL B-2784 / 534)).